The primary structure comprises 318 residues: Aspartate carbamoyltransferase catalytic subunit (318 aa).

Residues Arg67 and Thr68 each coordinate carbamoyl phosphate. Position 95 (Lys95) interacts with L-aspartate. Carbamoyl phosphate-binding residues include Arg117, His145, and Gln148. Positions 178 and 236 each coordinate L-aspartate. Carbamoyl phosphate contacts are provided by Gly277 and Pro278.

The protein belongs to the aspartate/ornithine carbamoyltransferase superfamily. ATCase family. In terms of assembly, heterododecamer (2C3:3R2) of six catalytic PyrB chains organized as two trimers (C3), and six regulatory PyrI chains organized as three dimers (R2).

The enzyme catalyses carbamoyl phosphate + L-aspartate = N-carbamoyl-L-aspartate + phosphate + H(+). It participates in pyrimidine metabolism; UMP biosynthesis via de novo pathway; (S)-dihydroorotate from bicarbonate: step 2/3. Functionally, catalyzes the condensation of carbamoyl phosphate and aspartate to form carbamoyl aspartate and inorganic phosphate, the committed step in the de novo pyrimidine nucleotide biosynthesis pathway. In Roseiflexus castenholzii (strain DSM 13941 / HLO8), this protein is Aspartate carbamoyltransferase catalytic subunit.